A 191-amino-acid chain; its full sequence is NADH-quinone oxidoreductase subunit B 2 (191 aa).

[4Fe-4S] cluster-binding residues include C69, C70, C134, and C164.

It belongs to the complex I 20 kDa subunit family. As to quaternary structure, NDH-1 is composed of 14 different subunits. Subunits NuoB, C, D, E, F, and G constitute the peripheral sector of the complex. [4Fe-4S] cluster is required as a cofactor.

It localises to the cell inner membrane. The enzyme catalyses a quinone + NADH + 5 H(+)(in) = a quinol + NAD(+) + 4 H(+)(out). Its function is as follows. NDH-1 shuttles electrons from NADH, via FMN and iron-sulfur (Fe-S) centers, to quinones in the respiratory chain. Couples the redox reaction to proton translocation (for every two electrons transferred, four hydrogen ions are translocated across the cytoplasmic membrane), and thus conserves the redox energy in a proton gradient. The protein is NADH-quinone oxidoreductase subunit B 2 of Gluconacetobacter diazotrophicus (strain ATCC 49037 / DSM 5601 / CCUG 37298 / CIP 103539 / LMG 7603 / PAl5).